Consider the following 187-residue polypeptide: Elongation factor P (187 aa).

Belongs to the elongation factor P family.

Its subcellular location is the cytoplasm. The protein operates within protein biosynthesis; polypeptide chain elongation. Involved in peptide bond synthesis. Stimulates efficient translation and peptide-bond synthesis on native or reconstituted 70S ribosomes in vitro. Probably functions indirectly by altering the affinity of the ribosome for aminoacyl-tRNA, thus increasing their reactivity as acceptors for peptidyl transferase. The chain is Elongation factor P (efp) from Treponema pallidum (strain Nichols).